The chain runs to 767 residues: Photosystem I P700 chlorophyll a apoprotein A1 (767 aa).

A run of 8 helical transmembrane segments spans residues 72-95 (IFSA…FHGA), 158-181 (LMSL…FHYH), 197-221 (LNHH…HVSL), 305-323 (IAHH…GHMY), 364-387 (WHAQ…QHMY), 403-429 (IGLF…IAMI), 451-473 (AIIS…LYVH), and 548-566 (FMVH…LILL). Residues Cys590 and Cys599 each contribute to the [4Fe-4S] cluster site. The next 2 helical transmembrane spans lie at 606–627 (HVFL…HFSW) and 681–703 (TSAY…MFLF). Chlorophyll a' is bound at residue His692. Chlorophyll a-binding residues include Met700 and Tyr708. Residue Trp709 coordinates phylloquinone. The chain crosses the membrane as a helical span at residues 741-761 (AVGVAHYLLGGIATTWAFFHA).

It belongs to the PsaA/PsaB family. In terms of assembly, the PsaA/B heterodimer binds the P700 chlorophyll special pair and subsequent electron acceptors. PSI consists of a core antenna complex that captures photons, and an electron transfer chain that converts photonic excitation into a charge separation. The cyanobacterial PSI reaction center is composed of one copy each of PsaA,B,C,D,E,F,I,J,K,L,M and X, and forms trimeric complexes. Requires PSI electron transfer chain: 5 chlorophyll a, 1 chlorophyll a', 2 phylloquinones and 3 4Fe-4S clusters. PSI core antenna: 90 chlorophyll a, 22 carotenoids, 3 phospholipids and 1 galactolipid. P700 is a chlorophyll a/chlorophyll a' dimer, A0 is one or more chlorophyll a, A1 is one or both phylloquinones and FX is a shared 4Fe-4S iron-sulfur center. as cofactor.

Its subcellular location is the cellular thylakoid membrane. It carries out the reaction reduced [plastocyanin] + hnu + oxidized [2Fe-2S]-[ferredoxin] = oxidized [plastocyanin] + reduced [2Fe-2S]-[ferredoxin]. Its function is as follows. PsaA and PsaB bind P700, the primary electron donor of photosystem I (PSI), as well as the electron acceptors A0, A1 and FX. PSI is a plastocyanin/cytochrome c6-ferredoxin oxidoreductase, converting photonic excitation into a charge separation, which transfers an electron from the donor P700 chlorophyll pair to the spectroscopically characterized acceptors A0, A1, FX, FA and FB in turn. Oxidized P700 is reduced on the lumenal side of the thylakoid membrane by plastocyanin or cytochrome c6. The sequence is that of Photosystem I P700 chlorophyll a apoprotein A1 from Synechococcus sp. (strain CC9311).